Reading from the N-terminus, the 154-residue chain is Lipoprotein signal peptidase (154 aa).

3 consecutive transmembrane segments (helical) span residues leucine 8 to valine 28, isoleucine 58 to isoleucine 78, and asparagine 88 to aspartate 108. Catalysis depends on residues aspartate 117 and aspartate 133. A helical membrane pass occupies residues isoleucine 131–serine 151.

Belongs to the peptidase A8 family.

It is found in the cell membrane. The catalysed reaction is Release of signal peptides from bacterial membrane prolipoproteins. Hydrolyzes -Xaa-Yaa-Zaa-|-(S,diacylglyceryl)Cys-, in which Xaa is hydrophobic (preferably Leu), and Yaa (Ala or Ser) and Zaa (Gly or Ala) have small, neutral side chains.. Its pathway is protein modification; lipoprotein biosynthesis (signal peptide cleavage). Functionally, this protein specifically catalyzes the removal of signal peptides from prolipoproteins. The sequence is that of Lipoprotein signal peptidase from Lactobacillus johnsonii (strain CNCM I-12250 / La1 / NCC 533).